We begin with the raw amino-acid sequence, 75 residues long: Kappa-scoloptoxin(03)-Ssm1d (75 aa).

An N-terminal signal peptide occupies residues 1 to 23 (MKLSMAILLVMALIIFTLDKNYS).

It belongs to the scoloptoxin-03 family. In terms of processing, contains 3 disulfide bonds. Expressed by the venom gland.

It is found in the secreted. Its function is as follows. Inhibits voltage-gated potassium channels. This chain is Kappa-scoloptoxin(03)-Ssm1d, found in Scolopendra mutilans (Chinese red-headed centipede).